A 357-amino-acid chain; its full sequence is Golgi to ER traffic protein 2 (357 aa).

Over 1-224 the chain is Cytoplasmic; sequence MSETTDKQLT…AKYHTYQEQL (224 aa). The span at 65 to 81 shows a compositional bias: low complexity; that stretch reads TDTATVTDSSTNATSVS. A disordered region spans residues 65–99; that stretch reads TDTATVTDSSTNATSVSPSAAKATPTSTGVSSAIS. A compositionally biased stretch (polar residues) spans 88 to 98; that stretch reads TPTSTGVSSAI. Residues 225–245 traverse the membrane as a helical segment; sequence WQFRFLVVRILATIFNFAYHF. Topologically, residues 246 to 270 are lumenal; sequence ITIPSFTASNHAYVRDLSEVYPLLG. A helical membrane pass occupies residues 271–290; that stretch reads FMTIFTSIEVVIIATYYLLF. Residues 291–334 lie on the Cytoplasmic side of the membrane; sequence TKLGLFHASNQKSFILKGISTLSMFVPQLLRYEPLVATFLGYKE. Residues 335–355 form a helical membrane-spanning segment; the sequence is LLGIFVGDLSLVVVMFGLLSF. The Lumenal portion of the chain corresponds to 356 to 357; the sequence is SN.

This sequence belongs to the GET2 family. In terms of assembly, component of the Golgi to ER traffic (GET) complex, which is composed of GET1, GET2 and GET3. Within the complex, GET1 and GET2 form a heterotetramer which is stabilized by phosphatidylinositol binding and which binds to the GET3 homodimer.

It localises to the endoplasmic reticulum membrane. The protein resides in the golgi apparatus membrane. Functionally, required for the post-translational delivery of tail-anchored (TA) proteins to the endoplasmic reticulum. Together with GET1, acts as a membrane receptor for soluble GET3, which recognizes and selectively binds the transmembrane domain of TA proteins in the cytosol. The GET complex cooperates with the HDEL receptor ERD2 to mediate the ATP-dependent retrieval of resident ER proteins that contain a C-terminal H-D-E-L retention signal from the Golgi to the ER. This Lodderomyces elongisporus (strain ATCC 11503 / CBS 2605 / JCM 1781 / NBRC 1676 / NRRL YB-4239) (Yeast) protein is Golgi to ER traffic protein 2.